An 856-amino-acid polypeptide reads, in one-letter code: MGNGTSRVVGCFVPSNDKNGVDLEFLEPLDEGLGHSFCYVRPSIFESPDITPSNSERFTIDSSTIDSETLTGSFRNDIVDDPSFLNRHNSKGLAETTFKAISGASVSANVSTARTGNQMALCSSDVLEPAASFESTSSFASIPLQPLPRGGSGPLNGFMSGPLERGFASGPLDRNNGFMSGPIEKGVMSGPLDVSDRSNFSAPLSFRRKKPRFQRFMRSVSGPMKSTLARTFSRRSGGLSWMHRFFLHPETRVSWAVGKDGKLHGEDPESCLESNRNLQWAHGKAGEDRVHVVLSEEQGWLFIGIYDGFSGPDAPDFVMSHLYKAIDKELEGLLWDYEEPSEDNQLQPDQEPPTEENMCDPESISEQHSKSVVAESEEVMIDDISSLGNTDTQIADGPPGDSAGPGKKSMRLYELLQLEQWEGEEIGLKRYGGNVALNNMTNQVENPSTSGGGAGNDPCTTDRSALDGIPNSGQRHGTKKSQISSKIRRMYQKQKSLRKKLFPWSYDWHREEGICVEEKIVESSGPIRRRWSGTVDHDAVLRAMARALESTEEAYMDMVEKSLDINPELALMGSCVLVMLMKDQDVYVMNVGDSRAILAQERLHDRHSNPGFGNDEGIGHKSRSRESLVRIELDRISEESPIHNQATPISVSNKNRDVTSYRLKMRAVQLSSDHSTSVEEEIWRIRSEHPEDDQSILKDRVKGQLKVTRAFGAGFLKKPNFNEALLEMFQVEYIGTDPYITCEPCTVHHRLTSSDRFMVLSSDGLYEYFSNEEVVAHVTWFIENVPEGDPAQYLIAELLSRAATKNGMEFHDLLDIPQGDRRKYHDDVSVMVVSLEGRIWRSSGQYYPERKQKFNR.

Phosphoserine occurs at positions 152, 189, and 201. The region spanning 269-835 (ESCLESNRNL…DDVSVMVVSL (567 aa)) is the PPM-type phosphatase domain. Positions 307 and 308 each coordinate Mn(2+). Disordered regions lie at residues 340–373 (PSED…KSVV), 388–407 (GNTD…GPGK), and 446–485 (NPST…QISS). The segment covering 395-407 (ADGPPGDSAGPGK) has biased composition (low complexity). The segment covering 471–485 (NSGQRHGTKKSQISS) has biased composition (polar residues). Mn(2+) contacts are provided by Asp-763 and Asp-826.

This sequence belongs to the PP2C family. Mg(2+) serves as cofactor. The cofactor is Mn(2+). In terms of tissue distribution, expressed in roots, leaves, stems, inflorescences, flowers and throughout the shoot meristem.

It localises to the nucleus. It carries out the reaction O-phospho-L-seryl-[protein] + H2O = L-seryl-[protein] + phosphate. The catalysed reaction is O-phospho-L-threonyl-[protein] + H2O = L-threonyl-[protein] + phosphate. Insensitive to okadaic acid. Its function is as follows. Involved in the regulation of pedicel length and of CLAVATA pathways controlling stem cell identity at shoot and flower meristems. This Arabidopsis thaliana (Mouse-ear cress) protein is Protein phosphatase 2C 32 (POL).